Here is a 176-residue protein sequence, read N- to C-terminus: Large ribosomal subunit protein uL16 (176 aa).

This sequence belongs to the universal ribosomal protein uL16 family.

The chain is Large ribosomal subunit protein uL16 from Sulfolobus acidocaldarius (strain ATCC 33909 / DSM 639 / JCM 8929 / NBRC 15157 / NCIMB 11770).